A 172-amino-acid polypeptide reads, in one-letter code: Photosystem I assembly protein Ycf3 (172 aa).

TPR repeat units lie at residues 35 to 68 (AFSY…EEDP), 72 to 105 (SYIL…NSQL), and 120 to 153 (GVKA…SPNN).

The protein belongs to the Ycf3 family.

Its subcellular location is the plastid. It localises to the chloroplast thylakoid membrane. In terms of biological role, essential for the assembly of the photosystem I (PSI) complex. May act as a chaperone-like factor to guide the assembly of the PSI subunits. The chain is Photosystem I assembly protein Ycf3 from Guillardia theta (Cryptophyte).